A 381-amino-acid chain; its full sequence is MQFFNTLHPTRPHWLLAALCLIASLLGAGTAQASRIKEVAAVEGVRSNQLTGFGLVVGLDGTGDQTTQMPYTAQGLTNYLQQLGITLPEAQVSKLQLKNVAAVLVTAALPAFARPGQAIDVNVSSMGNAKSLKGGTLITTPLKGADGEVYALAQGSLVVAGAGAAAGGSKVQINHLSAGRIPGGAQVERIVPTPLLEGASITLGLQASDFQTARRVAEAINRRFGAHSARALDGRTIDVTAPSESNARVSFIAEMEELQLESSIPSAKVVINSRTGSIVMNQAVTLGECAIAHGNLSVSISTTPVISQPNPLSTGGKTVVAEKSNIQIRQEPGMLIQLPKSTQLSDVVRALNALGATPQDLLAILQAIKAAGALNAELEVI.

Positions 1–33 (MQFFNTLHPTRPHWLLAALCLIASLLGAGTAQA) are cleaved as a signal peptide.

Belongs to the FlgI family. The basal body constitutes a major portion of the flagellar organelle and consists of four rings (L,P,S, and M) mounted on a central rod.

The protein localises to the periplasm. It localises to the bacterial flagellum basal body. Its function is as follows. Assembles around the rod to form the L-ring and probably protects the motor/basal body from shearing forces during rotation. This is Flagellar P-ring protein from Albidiferax ferrireducens (strain ATCC BAA-621 / DSM 15236 / T118) (Rhodoferax ferrireducens).